Here is a 333-residue protein sequence, read N- to C-terminus: DNA-directed RNA polymerase subunit alpha (333 aa).

Residues 1-233 (MVREKVKVST…NLFIPFLHVE (233 aa)) are alpha N-terminal domain (alpha-NTD). Residues 267-333 (LVFQYIFIDQ…LEKNRKFISN (67 aa)) are alpha C-terminal domain (alpha-CTD).

It belongs to the RNA polymerase alpha chain family. In terms of assembly, in plastids the minimal PEP RNA polymerase catalytic core is composed of four subunits: alpha, beta, beta', and beta''. When a (nuclear-encoded) sigma factor is associated with the core the holoenzyme is formed, which can initiate transcription.

It localises to the plastid. The protein resides in the chloroplast. It catalyses the reaction RNA(n) + a ribonucleoside 5'-triphosphate = RNA(n+1) + diphosphate. Its function is as follows. DNA-dependent RNA polymerase catalyzes the transcription of DNA into RNA using the four ribonucleoside triphosphates as substrates. The polypeptide is DNA-directed RNA polymerase subunit alpha (Aethionema grandiflorum (Persian stone-cress)).